The sequence spans 242 residues: tRNA (guanine-N(1)-)-methyltransferase (242 aa).

S-adenosyl-L-methionine is bound by residues G112 and 131–136 (LGDFIL).

This sequence belongs to the RNA methyltransferase TrmD family. As to quaternary structure, homodimer.

Its subcellular location is the cytoplasm. The catalysed reaction is guanosine(37) in tRNA + S-adenosyl-L-methionine = N(1)-methylguanosine(37) in tRNA + S-adenosyl-L-homocysteine + H(+). In terms of biological role, specifically methylates guanosine-37 in various tRNAs. This Crocosphaera subtropica (strain ATCC 51142 / BH68) (Cyanothece sp. (strain ATCC 51142)) protein is tRNA (guanine-N(1)-)-methyltransferase.